We begin with the raw amino-acid sequence, 355 residues long: Ion-translocating oxidoreductase complex subunit D (355 aa).

A run of 5 helical transmembrane segments spans residues 13–33 (GKLT…ALAV), 35–55 (VYYF…LALI), 77–97 (VILT…YWVI), 98–118 (LIGT…LGQN), and 128–148 (VVLL…ISLL). The residue at position 186 (threonine 186) is an FMN phosphoryl threonine. 5 consecutive transmembrane segments (helical) span residues 216 to 236 (AGLG…FLIW), 245 to 265 (PVAI…FGNA), 267 to 287 (AVGF…FFIA), 294 to 314 (PVTP…ICLI), and 318 to 338 (GNYP…VPLI).

Belongs to the NqrB/RnfD family. In terms of assembly, the complex is composed of six subunits: RnfA, RnfB, RnfC, RnfD, RnfE and RnfG. FMN serves as cofactor.

The protein localises to the cell inner membrane. Functionally, part of a membrane-bound complex that couples electron transfer with translocation of ions across the membrane. In Actinobacillus succinogenes (strain ATCC 55618 / DSM 22257 / CCUG 43843 / 130Z), this protein is Ion-translocating oxidoreductase complex subunit D.